The sequence spans 372 residues: MNLSSLSFRLLATLLGACVVVAPASAERIKDLAQVGGVRGNALVGYGLVVGLDGSGDRTSQAPFTVQSLKNLLGELGVNVPANVNPQLKNVAAVAIHAELPPFAKPGQPIDITVSSIANAVSLRGGSLLMAPLKGADGQVYAMAQGNLVVGGFGAQGKDGSRVSVNVPSVGRIPNGAIVERALPDVFAGTGEITLNLHQNDFTTVSRMVAAIDSSFGAGTARAVDGVTVAVRSPTDPGARIGLLSRLENVELSPGDAPAKVVVNARTGTVVIGQLVRVMPAAIAHGSLTVTISENTNVSQPGAFSGGRTAVTQQSTITATSEGSRMFKFEGGTTLDQIVRAVNEVGAAPGDLVAILEALKQAGALSAELEVI.

A signal peptide spans 1-26 (MNLSSLSFRLLATLLGACVVVAPASA).

This sequence belongs to the FlgI family. In terms of assembly, the basal body constitutes a major portion of the flagellar organelle and consists of four rings (L,P,S, and M) mounted on a central rod.

Its subcellular location is the periplasm. It localises to the bacterial flagellum basal body. Its function is as follows. Assembles around the rod to form the L-ring and probably protects the motor/basal body from shearing forces during rotation. This Xanthomonas oryzae pv. oryzae (strain MAFF 311018) protein is Flagellar P-ring protein.